Reading from the N-terminus, the 230-residue chain is Potassium/proton antiporter CemA (230 aa).

The next 4 membrane-spanning stretches (helical) occupy residues 7-27 (LPSL…SFSF), 106-126 (IILH…FFFL), 145-165 (LNDS…VGFH), and 181-201 (LGWA…PVIL).

Belongs to the CemA family.

It localises to the plastid. Its subcellular location is the chloroplast inner membrane. The catalysed reaction is K(+)(in) + H(+)(out) = K(+)(out) + H(+)(in). Functionally, contributes to K(+)/H(+) antiport activity by supporting proton efflux to control proton extrusion and homeostasis in chloroplasts in a light-dependent manner to modulate photosynthesis. Prevents excessive induction of non-photochemical quenching (NPQ) under continuous-light conditions. Indirectly promotes efficient inorganic carbon uptake into chloroplasts. This is Potassium/proton antiporter CemA from Lolium perenne (Perennial ryegrass).